Reading from the N-terminus, the 250-residue chain is Putative apoptosis inhibitor ORF99 (250 aa).

A BIR repeat occupies 13 to 78; that stretch reads RVNSFGGWSK…KFSGDCLYLK (66 aa).

Its function is as follows. May act as an apoptosis inhibitor. The protein is Putative apoptosis inhibitor ORF99 of Ostreid herpesvirus 1 (isolate France) (OsHV-1).